We begin with the raw amino-acid sequence, 502 residues long: Glycerol kinase (502 aa).

Thr-14 lines the ADP pocket. Residues Thr-14, Thr-15, and Ser-16 each coordinate ATP. Thr-14 lines the sn-glycerol 3-phosphate pocket. Residue Arg-18 coordinates ADP. Sn-glycerol 3-phosphate-binding residues include Arg-84, Glu-85, Tyr-136, and Asp-246. 5 residues coordinate glycerol: Arg-84, Glu-85, Tyr-136, Asp-246, and Gln-247. Positions 268 and 311 each coordinate ADP. ATP contacts are provided by Thr-268, Gly-311, Gln-315, and Gly-412. Residues Gly-412 and Asn-416 each coordinate ADP.

This sequence belongs to the FGGY kinase family. As to quaternary structure, homotetramer and homodimer (in equilibrium). Heterodimer with EIIA-Glc. Binds 1 zinc ion per glycerol kinase EIIA-Glc dimer. The zinc ion is important for dimerization.

The enzyme catalyses glycerol + ATP = sn-glycerol 3-phosphate + ADP + H(+). Its pathway is polyol metabolism; glycerol degradation via glycerol kinase pathway; sn-glycerol 3-phosphate from glycerol: step 1/1. Activity of this regulatory enzyme is affected by several metabolites. Allosterically and non-competitively inhibited by fructose 1,6-bisphosphate (FBP) and unphosphorylated phosphocarrier protein EIIA-Glc (III-Glc), an integral component of the bacterial phosphotransferase (PTS) system. In terms of biological role, key enzyme in the regulation of glycerol uptake and metabolism. Catalyzes the phosphorylation of glycerol to yield sn-glycerol 3-phosphate. This Citrobacter koseri (strain ATCC BAA-895 / CDC 4225-83 / SGSC4696) protein is Glycerol kinase.